Here is a 280-residue protein sequence, read N- to C-terminus: DCN1-like protein 4 (280 aa).

The interval 37 to 71 (GPESHGTACCSRAMPPRKKRRPTAGDDLSAKKSRQ) is disordered. The DCUN1 domain occupies 89–275 (FSSKRCLEWF…LLDEFVEWYK (187 aa)).

As to quaternary structure, may interact (via the DCUN1 domain) with unneddylated cullins.

Its subcellular location is the nucleus. Functionally, contributes to the neddylation of all cullins by transferring NEDD8 from N-terminally acetylated NEDD8-conjugating E2s enzyme to different cullin C-terminal domain-RBX complexes. This Danio rerio (Zebrafish) protein is DCN1-like protein 4.